The sequence spans 102 residues: Large ribosomal subunit protein bL21 (102 aa).

The protein belongs to the bacterial ribosomal protein bL21 family. As to quaternary structure, part of the 50S ribosomal subunit. Contacts protein L20.

In terms of biological role, this protein binds to 23S rRNA in the presence of protein L20. This Limosilactobacillus fermentum (strain NBRC 3956 / LMG 18251) (Lactobacillus fermentum) protein is Large ribosomal subunit protein bL21.